Consider the following 206-residue polypeptide: MARYLGPKLKLSRREGTDLFLKSGVRAIDTKCKIDTAPGQHGARKPRLSDYGSQLREKQKVRRIYGILERQFRNYYKEANRLKGNTGENLLVLLEGRLDNVVYRMGFAATRAEARQLVSHKAIVVNGRVVNIPSFQVSVNDVVAVREKSKKQARIKASLELAEQREKPTWLEVEAAKMEGVFKRVPERSDLSADINEHLIVELYSK.

The S4 RNA-binding domain maps to 96–156 (GRLDNVVYRM…EKSKKQARIK (61 aa)).

Belongs to the universal ribosomal protein uS4 family. As to quaternary structure, part of the 30S ribosomal subunit. Contacts protein S5. The interaction surface between S4 and S5 is involved in control of translational fidelity.

Its function is as follows. One of the primary rRNA binding proteins, it binds directly to 16S rRNA where it nucleates assembly of the body of the 30S subunit. With S5 and S12 plays an important role in translational accuracy. This is Small ribosomal subunit protein uS4 from Histophilus somni (strain 2336) (Haemophilus somnus).